A 437-amino-acid polypeptide reads, in one-letter code: Trigger factor (437 aa).

In terms of domain architecture, PPIase FKBP-type spans 161–246; sequence DDQVNIDFVG…VNSVSAPQLP (86 aa).

Belongs to the FKBP-type PPIase family. Tig subfamily.

It localises to the cytoplasm. It carries out the reaction [protein]-peptidylproline (omega=180) = [protein]-peptidylproline (omega=0). Functionally, involved in protein export. Acts as a chaperone by maintaining the newly synthesized protein in an open conformation. Functions as a peptidyl-prolyl cis-trans isomerase. The polypeptide is Trigger factor (Pseudomonas putida (strain W619)).